The sequence spans 151 residues: UPF0756 membrane protein Dred_1676 (151 aa).

A run of 4 helical transmembrane segments spans residues 9 to 29 (VILL…CASV), 47 to 67 (THGL…PIAT), 75 to 95 (LLYN…ILAT), and 111 to 131 (IIFG…GQPV).

This sequence belongs to the UPF0756 family.

It is found in the cell membrane. The chain is UPF0756 membrane protein Dred_1676 from Desulforamulus reducens (strain ATCC BAA-1160 / DSM 100696 / MI-1) (Desulfotomaculum reducens).